Consider the following 467-residue polypeptide: D-hydantoinase (467 aa).

Positions 65, 67, and 156 each coordinate Zn(2+). K156 carries the post-translational modification N6-carboxylysine. Residue Y161 coordinates substrate. 2 residues coordinate Zn(2+): H189 and H245. S294 provides a ligand contact to substrate. D321 serves as a coordination point for Zn(2+). N343 is a binding site for substrate.

Belongs to the metallo-dependent hydrolases superfamily. Hydantoinase/dihydropyrimidinase family. As to quaternary structure, homotetramer. Zn(2+) is required as a cofactor. Post-translationally, carboxylation allows a single lysine to coordinate two zinc ions.

Catalyzes the stereospecific hydrolysis of the cyclic amide bond of D-hydantoin derivatives. This is D-hydantoinase (hyuA) from Streptomyces coelicolor (strain ATCC BAA-471 / A3(2) / M145).